The chain runs to 213 residues: Retinitis pigmentosa 9 protein homolog (213 aa).

A disordered region spans residues 1–61 (MSSGAGSRRP…IKEDETKPED (61 aa)). The interval 1–147 (MSSGAGSRRP…RENKRHEKDV (147 aa)) is PIM1-binding. Basic and acidic residues-rich tracts occupy residues 9-21 (RPRE…LQRR) and 52-61 (IKEDETKPED). The CCHC-type zinc-finger motif lies at 96–114 (QCWRCKRYGHRTGDKECPF). A Glycyl lysine isopeptide (Lys-Gly) (interchain with G-Cter in SUMO2) cross-link involves residue Lys121. The segment at 154 to 213 (QLLEDSTSDDDGSSSSSSGDREKRKKRKKKEKHKKRKKEKKKKKKRKHKASKSSESSDSE) is disordered. The segment covering 176-204 (KRKKRKKKEKHKKRKKEKKKKKKRKHKAS) has biased composition (basic residues). 2 positions are modified to phosphoserine; by PIM1; in vitro: Ser204 and Ser206.

Binds to PIM1. Binds to ZNHIT4. In terms of tissue distribution, highly expressed in the testis, moderately in the kidney, liver and spleen, and weakly in the skeletal muscle and heart.

It localises to the nucleus. Is thought to be a target protein for the PIM1 kinase. May play some roles in B-cell proliferation in association with PIM1. In Mus musculus (Mouse), this protein is Retinitis pigmentosa 9 protein homolog (rp9).